The sequence spans 219 residues: uncharacterized protein (219 aa).

Topologically, residues 1 to 15 (MLKLTTTSVTFHVLR) are cytoplasmic. The chain crosses the membrane as a helical span at residues 16–36 (YFQLGLSVTNLLLASFAIITN). Topologically, residues 37-41 (YKVDR) are vacuolar. The helical transmembrane segment at 42–62 (ILRLSLAVSIISSVYFGIVRF) threads the bilayer. A topological domain (cytoplasmic) is located at residue Leu-63. A helical transmembrane segment spans residues 64–84 (PVLLIFVMEIVQTVLWFTAFV). Residues 85 to 116 (TLASKFGSMSCSSMPRGINFDYSGSCKIAKID) lie on the Vacuolar side of the membrane. The chain crosses the membrane as a helical span at residues 117–137 (ILPEAVLFILFLATTYASYIT). Over 138 to 219 (VLSQAKENGS…VIDGSIEHSS (82 aa)) the chain is Cytoplasmic. The tract at residues 176–219 (PLLDLEVQEDARTETESIEDSTDSEDNANIEQEKVIDGSIEHSS) is disordered. Over residues 191-203 (ESIEDSTDSEDNA) the composition is skewed to acidic residues. Basic and acidic residues predominate over residues 206-219 (EQEKVIDGSIEHSS).

It localises to the vacuole membrane. This is an uncharacterized protein from Saccharomyces cerevisiae (strain ATCC 204508 / S288c) (Baker's yeast).